The chain runs to 1257 residues: Phosphatidylinositol 3,4,5-trisphosphate 5-phosphatase 2 (1257 aa).

In terms of domain architecture, SH2 spans 21–117 (WYHRDLSRAA…GLVCALLLPV (97 aa)). Residues 119 to 132 (GEREPDPPDDRDAS) are compositionally biased toward basic and acidic residues. The disordered stretch occupies residues 119–181 (GEREPDPPDD…ESTPNGLSTV (63 aa)). At S132 the chain carries Phosphoserine. Pro residues predominate over residues 156–166 (PSSPLPAPETP). A Phosphothreonine modification is found at T165. Residues S241 and S353 each carry the phosphoserine modification. Y887 carries the phosphotyrosine modification. A Phosphoserine modification is found at S891. The interval 897–986 (TGAKSKAPSV…PPKNSFNNPA (90 aa)) is disordered. A compositionally biased stretch (pro residues) spans 939 to 951 (PPPTGRPPAPPRA). The SH3-binding signature appears at 945–950 (PPAPPR). The segment covering 952 to 966 (VPREESLNPRLKSEG) has biased composition (basic and acidic residues). Positions 984 to 987 (NPAY) match the NPXY motif motif. A Phosphotyrosine modification is found at Y987. A disordered region spans residues 1004–1115 (SFARAPIPPT…PASTFLEEVA (112 aa)). Composition is skewed to pro residues over residues 1049-1060 (LPPPDFPPPPLP) and 1088-1104 (GPPPPKAHPRPPLPPGT). S1132 carries the post-translational modification Phosphoserine. A phosphotyrosine mark is found at Y1136 and Y1161. The SAM domain maps to 1195 to 1257 (LGEAGMGAWL…LLLDTLQLSK (63 aa)). Phosphoserine is present on S1256.

The protein belongs to the inositol 1,4,5-trisphosphate 5-phosphatase family. As to quaternary structure, interacts with tyrosine phosphorylated form of SHC1. Interacts with EGFR. Upon stimulation by the EGF signaling pathway, it forms a complex with SHC1 and EGFR. Interacts with cytoskeletal protein SORBS3/vinexin, promoting its localization to the periphery of cells. Forms a complex with filamin (FLNA or FLNB), actin, GPIb (GP1BA or GP1BB) that regulates cortical and submembraneous actin. Interacts with c-Met/MET, when c-Met/MET is phosphorylated on 'Tyr-1356'. Interacts with p130Cas/BCAR1. Interacts with CENTD3/ARAP3 via its SAM domain. Interacts with c-Cbl/CBL and CAP/SORBS1. Interacts with activated EPHA2 receptor. Interacts with receptors FCGR2A. Interacts with FCGR2B. Interacts with tyrosine kinase ABL1. Interacts with tyrosine kinase TEC. Interacts with CSF1R. Interacts (via N-terminus) with SH3YL1 (via SH3 domain). Interacts (via SH2 domain) with tyrosine phosphorylated KLRC1 (via ITIM). Interacts with NEDD9/HEF1. Post-translationally, tyrosine phosphorylated by the members of the SRC family after exposure to a diverse array of extracellular stimuli such as insulin, growth factors such as EGF or PDGF, chemokines, integrin ligands and hypertonic and oxidative stress. May be phosphorylated upon IgG receptor FCGR2B-binding. Phosphorylated at Tyr-987 following cell attachment and spreading. Phosphorylated at Tyr-1161 following EGF signaling pathway stimulation.

The protein resides in the cytoplasm. The protein localises to the cytosol. It localises to the cytoskeleton. It is found in the membrane. Its subcellular location is the cell projection. The protein resides in the filopodium. The protein localises to the lamellipodium. It localises to the basal cell membrane. It is found in the nucleus. Its subcellular location is the nucleus speckle. The protein resides in the spindle pole. It catalyses the reaction a 1,2-diacyl-sn-glycero-3-phospho-(1D-myo-inositol-3,4,5-trisphosphate) + H2O = a 1,2-diacyl-sn-glycero-3-phospho-(1D-myo-inositol-3,4-bisphosphate) + phosphate. The catalysed reaction is 1,2-dioctanoyl-sn-glycero-3-phospho-(1D-myo-inositol-3,4,5-trisphosphate) + H2O = 1,2-dioctanoyl-sn-glycero-3-phospho-(1D-myo-inositol-3,4-bisphosphate) + phosphate. It carries out the reaction 1,2-dihexadecanoyl-sn-glycero-3-phospho-(1D-myo-inositol-3,4,5-trisphosphate) + H2O = 1,2-dihexadecanoyl-sn-glycero-3-phospho-(1D-myo-inositol-3,4-bisphosphate) + phosphate. Its activity is regulated as follows. Activated upon translocation to the sites of synthesis of PtdIns(3,4,5)P3 in the membrane. Enzymatic activity is enhanced in the presence of phosphatidylserine. Phosphatidylinositol (PtdIns) phosphatase that specifically hydrolyzes the 5-phosphate of phosphatidylinositol-3,4,5-trisphosphate (PtdIns(3,4,5)P3) to produce PtdIns(3,4)P2, thereby negatively regulating the PI3K (phosphoinositide 3-kinase) pathways. Required for correct mitotic spindle orientation and therefore progression of mitosis. Plays a central role in regulation of PI3K-dependent insulin signaling, although the precise molecular mechanisms and signaling pathways remain unclear. While overexpression reduces both insulin-stimulated MAP kinase and Akt activation, its absence does not affect insulin signaling or GLUT4 trafficking. Confers resistance to dietary obesity. May act by regulating AKT2, but not AKT1, phosphorylation at the plasma membrane. Part of a signaling pathway that regulates actin cytoskeleton remodeling. Required for the maintenance and dynamic remodeling of actin structures as well as in endocytosis, having a major impact on ligand-induced EGFR internalization and degradation. Participates in regulation of cortical and submembraneous actin by hydrolyzing PtdIns(3,4,5)P3 thereby regulating membrane ruffling. Regulates cell adhesion and cell spreading. Required for HGF-mediated lamellipodium formation, cell scattering and spreading. Acts as a negative regulator of EPHA2 receptor endocytosis by inhibiting via PI3K-dependent Rac1 activation. Acts as a regulator of neuritogenesis by regulating PtdIns(3,4,5)P3 level and is required to form an initial protrusive pattern, and later, maintain proper neurite outgrowth. Acts as a negative regulator of the FC-gamma-RIIA receptor (FCGR2A). Mediates signaling from the FC-gamma-RIIB receptor (FCGR2B), playing a central role in terminating signal transduction from activating immune/hematopoietic cell receptor systems. Involved in EGF signaling pathway. Upon stimulation by EGF, it is recruited by EGFR and dephosphorylates PtdIns(3,4,5)P3. Plays a negative role in regulating the PI3K-PKB pathway, possibly by inhibiting PKB activity. Down-regulates Fc-gamma-R-mediated phagocytosis in macrophages independently of INPP5D/SHIP1. In macrophages, down-regulates NF-kappa-B-dependent gene transcription by regulating macrophage colony-stimulating factor (M-CSF)-induced signaling. Plays a role in the localization of AURKA and NEDD9/HEF1 to the basolateral membrane at interphase in polarized cysts, thereby mediates cell cycle homeostasis, cell polarization and cilia assembly. Additionally promotion of cilia growth is also facilitated by hydrolysis of (PtdIns(3,4,5)P3) to PtdIns(3,4)P2. Promotes formation of apical membrane-initiation sites during the initial stages of lumen formation via Rho family-induced actin filament organization and CTNNB1 localization to cell-cell contacts. May also hydrolyze PtdIns(1,3,4,5)P4, and could thus affect the levels of the higher inositol polyphosphates like InsP6. Involved in endochondral ossification. The protein is Phosphatidylinositol 3,4,5-trisphosphate 5-phosphatase 2 of Rattus norvegicus (Rat).